We begin with the raw amino-acid sequence, 368 residues long: Dihydroorotate dehydrogenase (quinone) (368 aa).

Residues 67-71 (AGFDK) and Thr91 contribute to the FMN site. Residue Lys71 coordinates substrate. Position 116–120 (116–120 (NRMGF)) interacts with substrate. The FMN site is built by Asn146 and Asn179. A substrate-binding site is contributed by Asn179. The Nucleophile role is filled by Ser182. Asn184 serves as a coordination point for substrate. FMN-binding residues include Lys222 and Thr250. 251–252 (NT) is a binding site for substrate. FMN contacts are provided by residues Gly276, Gly305, and 326–327 (YS).

The protein belongs to the dihydroorotate dehydrogenase family. Type 2 subfamily. As to quaternary structure, monomer. FMN is required as a cofactor.

It is found in the cell membrane. The catalysed reaction is (S)-dihydroorotate + a quinone = orotate + a quinol. The protein operates within pyrimidine metabolism; UMP biosynthesis via de novo pathway; orotate from (S)-dihydroorotate (quinone route): step 1/1. In terms of biological role, catalyzes the conversion of dihydroorotate to orotate with quinone as electron acceptor. The sequence is that of Dihydroorotate dehydrogenase (quinone) from Streptomyces coelicolor (strain ATCC BAA-471 / A3(2) / M145).